We begin with the raw amino-acid sequence, 140 residues long: uncharacterized protein (140 aa).

The VOC domain maps to 3–131 (RLDHIGIAVF…NGVLVELCEP (129 aa)). Residues histidine 6, glutamate 53, histidine 77, and glutamate 127 each contribute to the a divalent metal cation site.

Belongs to the methylmalonyl-CoA epimerase family.

This is an uncharacterized protein from Bacillus subtilis (strain 168).